A 379-amino-acid polypeptide reads, in one-letter code: Cytochrome b (379 aa).

The next 4 membrane-spanning stretches (helical) occupy residues 33 to 53 (FGSL…FLAM), 77 to 98 (WTIR…FIHV), 113 to 133 (WNIG…GYVL), and 178 to 198 (FFAL…IHLL). His-83 and His-97 together coordinate heme b. Heme b contacts are provided by His-182 and His-196. His-201 contributes to the a ubiquinone binding site. A run of 4 helical transmembrane segments spans residues 226 to 246 (TKDF…TLFY), 288 to 308 (LGGV…PFLQ), 320 to 340 (LSQF…WIGG), and 347 to 367 (FINI…FIMP).

Belongs to the cytochrome b family. The cytochrome bc1 complex contains 11 subunits: 3 respiratory subunits (MT-CYB, CYC1 and UQCRFS1), 2 core proteins (UQCRC1 and UQCRC2) and 6 low-molecular weight proteins (UQCRH/QCR6, UQCRB/QCR7, UQCRQ/QCR8, UQCR10/QCR9, UQCR11/QCR10 and a cleavage product of UQCRFS1). This cytochrome bc1 complex then forms a dimer. Requires heme b as cofactor.

The protein localises to the mitochondrion inner membrane. In terms of biological role, component of the ubiquinol-cytochrome c reductase complex (complex III or cytochrome b-c1 complex) that is part of the mitochondrial respiratory chain. The b-c1 complex mediates electron transfer from ubiquinol to cytochrome c. Contributes to the generation of a proton gradient across the mitochondrial membrane that is then used for ATP synthesis. The protein is Cytochrome b (MT-CYB) of Lepilemur aeeclis (Sportive lemur).